We begin with the raw amino-acid sequence, 342 residues long: A-type ATP synthase subunit C (342 aa).

The protein belongs to the V-ATPase V0D/AC39 subunit family. In terms of assembly, has multiple subunits with at least A(3), B(3), C, D, E, F, H, I and proteolipid K(x).

It localises to the cell membrane. Component of the A-type ATP synthase that produces ATP from ADP in the presence of a proton gradient across the membrane. The sequence is that of A-type ATP synthase subunit C from Archaeoglobus fulgidus (strain ATCC 49558 / DSM 4304 / JCM 9628 / NBRC 100126 / VC-16).